Here is a 915-residue protein sequence, read N- to C-terminus: Translation initiation factor IF-2 (915 aa).

The span at Gln-83–Leu-94 shows a compositional bias: basic and acidic residues. 3 disordered regions span residues Gln-83 to Pro-177, Glu-216 to Val-280, and Ile-293 to Glu-328. Low complexity-rich tracts occupy residues Val-111 to Ser-129 and Ala-137 to Pro-164. The span at Leu-165–Pro-177 shows a compositional bias: pro residues. Polar residues predominate over residues Ile-293 to Arg-305. Residues Met-314–Glu-328 show a composition bias toward basic and acidic residues. Positions Thr-412 to Lys-582 constitute a tr-type G domain. Residues Gly-421 to Thr-428 form a G1 region. Residue Gly-421–Thr-428 participates in GTP binding. A G2 region spans residues Gly-446–His-450. The interval Asp-468–Gly-471 is G3. GTP-binding positions include Asp-468–His-472 and Asn-522–Asp-525. The segment at Asn-522–Asp-525 is G4. The interval Ser-558–Lys-560 is G5.

Belongs to the TRAFAC class translation factor GTPase superfamily. Classic translation factor GTPase family. IF-2 subfamily.

It localises to the cytoplasm. Functionally, one of the essential components for the initiation of protein synthesis. Protects formylmethionyl-tRNA from spontaneous hydrolysis and promotes its binding to the 30S ribosomal subunits. Also involved in the hydrolysis of GTP during the formation of the 70S ribosomal complex. This is Translation initiation factor IF-2 from Chlorobium luteolum (strain DSM 273 / BCRC 81028 / 2530) (Pelodictyon luteolum).